A 1173-amino-acid polypeptide reads, in one-letter code: DNA-directed RNA polymerase subunit beta (1173 aa).

It belongs to the RNA polymerase beta chain family. As to quaternary structure, the RNAP catalytic core consists of 2 alpha, 1 beta, 1 beta' and 1 omega subunit. When a sigma factor is associated with the core the holoenzyme is formed, which can initiate transcription.

The enzyme catalyses RNA(n) + a ribonucleoside 5'-triphosphate = RNA(n+1) + diphosphate. Its function is as follows. DNA-dependent RNA polymerase catalyzes the transcription of DNA into RNA using the four ribonucleoside triphosphates as substrates. The sequence is that of DNA-directed RNA polymerase subunit beta from Kosmotoga olearia (strain ATCC BAA-1733 / DSM 21960 / TBF 19.5.1).